Consider the following 52-residue polypeptide: Rubredoxin (52 aa).

One can recognise a Rubredoxin-like domain in the interval 1–51 (MDKYECSICGYIYDEAEGDDGNVAAGTKFADLPADWVCPTCGADKDAFVKM). Fe cation-binding residues include cysteine 6, cysteine 9, cysteine 38, and cysteine 41.

This sequence belongs to the rubredoxin family. Requires Fe(3+) as cofactor.

In terms of biological role, rubredoxin is a small nonheme, iron protein lacking acid-labile sulfide. Its single Fe, chelated to 4 Cys, functions as an electron acceptor and may also stabilize the conformation of the molecule. This chain is Rubredoxin, found in Megasphaera elsdenii.